Reading from the N-terminus, the 307-residue chain is Oxygen-dependent coproporphyrinogen-III oxidase (307 aa).

S99 serves as a coordination point for substrate. Residues H103 and H113 each coordinate a divalent metal cation. H113 acts as the Proton donor in catalysis. 115-117 (NVR) is a binding site for substrate. A divalent metal cation-binding residues include H152 and H182. The interval 247–282 (YVEFNLVFDRGTLFGLQSGGRTESILMSMPPVANWR) is important for dimerization. A substrate-binding site is contributed by 265–267 (GGR).

The protein belongs to the aerobic coproporphyrinogen-III oxidase family. In terms of assembly, homodimer. The cofactor is a divalent metal cation.

It localises to the cytoplasm. It carries out the reaction coproporphyrinogen III + O2 + 2 H(+) = protoporphyrinogen IX + 2 CO2 + 2 H2O. The protein operates within porphyrin-containing compound metabolism; protoporphyrin-IX biosynthesis; protoporphyrinogen-IX from coproporphyrinogen-III (O2 route): step 1/1. Functionally, involved in the heme biosynthesis. Catalyzes the aerobic oxidative decarboxylation of propionate groups of rings A and B of coproporphyrinogen-III to yield the vinyl groups in protoporphyrinogen-IX. This Burkholderia cenocepacia (strain ATCC BAA-245 / DSM 16553 / LMG 16656 / NCTC 13227 / J2315 / CF5610) (Burkholderia cepacia (strain J2315)) protein is Oxygen-dependent coproporphyrinogen-III oxidase.